The following is a 108-amino-acid chain: Ribonuclease P protein component 4 (108 aa).

Residues C67, C70, C93, and C96 each coordinate Zn(2+).

It belongs to the eukaryotic/archaeal RNase P protein component 4 family. In terms of assembly, consists of a catalytic RNA component and at least 4-5 protein subunits. Zn(2+) is required as a cofactor.

It localises to the cytoplasm. The catalysed reaction is Endonucleolytic cleavage of RNA, removing 5'-extranucleotides from tRNA precursor.. In terms of biological role, part of ribonuclease P, a protein complex that generates mature tRNA molecules by cleaving their 5'-ends. The chain is Ribonuclease P protein component 4 from Methanococcoides burtonii (strain DSM 6242 / NBRC 107633 / OCM 468 / ACE-M).